We begin with the raw amino-acid sequence, 126 residues long: Large ribosomal subunit protein bL19 (126 aa).

This sequence belongs to the bacterial ribosomal protein bL19 family.

Its function is as follows. This protein is located at the 30S-50S ribosomal subunit interface and may play a role in the structure and function of the aminoacyl-tRNA binding site. The sequence is that of Large ribosomal subunit protein bL19 from Paracoccus denitrificans (strain Pd 1222).